The chain runs to 226 residues: Thymidylate kinase (226 aa).

Residue 12 to 19 (GIDGAGKS) coordinates ATP.

Belongs to the thymidylate kinase family.

It carries out the reaction dTMP + ATP = dTDP + ADP. Phosphorylation of dTMP to form dTDP in both de novo and salvage pathways of dTTP synthesis. This Verminephrobacter eiseniae (strain EF01-2) protein is Thymidylate kinase.